The following is a 425-amino-acid chain: Protein CLP1 homolog (425 aa).

ATP contacts are provided by residues Glu18, Lys59, and 121–126; that span reads DVGKST.

The protein belongs to the Clp1 family. Clp1 subfamily.

The protein localises to the nucleus. Functionally, required for endonucleolytic cleavage during polyadenylation-dependent pre-mRNA 3'-end formation. This chain is Protein CLP1 homolog (cbc), found in Drosophila grimshawi (Hawaiian fruit fly).